The chain runs to 344 residues: Isopentenyl-diphosphate delta-isomerase (344 aa).

Arg9 to Lys10 contacts substrate. Residues Ala65–Thr67, Ser95, and Asn124 each bind FMN. A substrate-binding site is contributed by Gln154. Glu155 contacts Mg(2+). Residues Lys185, Thr215, Gly259–Arg261, and Ser280–Gly281 contribute to the FMN site.

This sequence belongs to the IPP isomerase type 2 family. In terms of assembly, homooctamer. Dimer of tetramers. The cofactor is FMN. It depends on NADPH as a cofactor. Mg(2+) serves as cofactor.

Its subcellular location is the cytoplasm. It carries out the reaction isopentenyl diphosphate = dimethylallyl diphosphate. Functionally, involved in the biosynthesis of isoprenoids. Catalyzes the 1,3-allylic rearrangement of the homoallylic substrate isopentenyl (IPP) to its allylic isomer, dimethylallyl diphosphate (DMAPP). This Lacticaseibacillus paracasei (strain ATCC 334 / BCRC 17002 / CCUG 31169 / CIP 107868 / KCTC 3260 / NRRL B-441) (Lactobacillus paracasei) protein is Isopentenyl-diphosphate delta-isomerase.